Consider the following 92-residue polypeptide: Small ribosomal subunit protein bS20 (92 aa).

The interval M1–A23 is disordered.

This sequence belongs to the bacterial ribosomal protein bS20 family.

Its function is as follows. Binds directly to 16S ribosomal RNA. This Rhizobium leguminosarum bv. trifolii (strain WSM2304) protein is Small ribosomal subunit protein bS20.